A 406-amino-acid polypeptide reads, in one-letter code: Cysteine desulfurase (406 aa).

K226 is subject to N6-(pyridoxal phosphate)lysine. Catalysis depends on C364, which acts as the Cysteine persulfide intermediate.

It belongs to the class-V pyridoxal-phosphate-dependent aminotransferase family. Csd subfamily. Homodimer. Interacts with SufE and the SufBCD complex composed of SufB, SufC and SufD. The interaction with SufE is required to mediate the direct transfer of the sulfur atom from the S-sulfanylcysteine. Pyridoxal 5'-phosphate is required as a cofactor.

The protein resides in the cytoplasm. The enzyme catalyses (sulfur carrier)-H + L-cysteine = (sulfur carrier)-SH + L-alanine. The catalysed reaction is L-selenocysteine + AH2 = hydrogenselenide + L-alanine + A + H(+). It participates in cofactor biosynthesis; iron-sulfur cluster biosynthesis. Functionally, cysteine desulfurases mobilize the sulfur from L-cysteine to yield L-alanine, an essential step in sulfur metabolism for biosynthesis of a variety of sulfur-containing biomolecules. Component of the suf operon, which is activated and required under specific conditions such as oxidative stress and iron limitation. Acts as a potent selenocysteine lyase in vitro, that mobilizes selenium from L-selenocysteine. Selenocysteine lyase activity is however unsure in vivo. This Escherichia coli O6:K15:H31 (strain 536 / UPEC) protein is Cysteine desulfurase.